Here is a 235-residue protein sequence, read N- to C-terminus: Sugar fermentation stimulation protein homolog (235 aa).

This sequence belongs to the SfsA family.

The sequence is that of Sugar fermentation stimulation protein homolog from Maricaulis maris (strain MCS10) (Caulobacter maris).